A 144-amino-acid chain; its full sequence is Elicitor-responsive protein 3 (144 aa).

In terms of domain architecture, C2 spans 1 to 103 (MVQGTLEVLL…YTEGSIPPTV (103 aa)). Positions 20, 26, 73, 75, and 81 each coordinate Ca(2+). Positions 123-144 (TPEDDRDRGLSEEDIGGWKQSS) are disordered.

Ca(2+) serves as cofactor.

The sequence is that of Elicitor-responsive protein 3 (ERG3) from Oryza sativa subsp. indica (Rice).